A 147-amino-acid polypeptide reads, in one-letter code: Large ribosomal subunit protein bL9 (147 aa).

This sequence belongs to the bacterial ribosomal protein bL9 family.

In terms of biological role, binds to the 23S rRNA. The sequence is that of Large ribosomal subunit protein bL9 from Geotalea uraniireducens (strain Rf4) (Geobacter uraniireducens).